A 1392-amino-acid polypeptide reads, in one-letter code: DNA-directed RNA polymerase subunit beta (1392 aa).

This sequence belongs to the RNA polymerase beta chain family. The RNAP catalytic core consists of 2 alpha, 1 beta, 1 beta' and 1 omega subunit. When a sigma factor is associated with the core the holoenzyme is formed, which can initiate transcription.

It catalyses the reaction RNA(n) + a ribonucleoside 5'-triphosphate = RNA(n+1) + diphosphate. Functionally, DNA-dependent RNA polymerase catalyzes the transcription of DNA into RNA using the four ribonucleoside triphosphates as substrates. The protein is DNA-directed RNA polymerase subunit beta of Neisseria gonorrhoeae (strain NCCP11945).